The primary structure comprises 1051 residues: SWI/SNF-related matrix-associated actin-dependent regulator of chromatin subfamily A member 5 (1051 aa).

Residues 1-15 (MSSAVEPPPPPPPES) are compositionally biased toward pro residues. The interval 1-81 (MSSAVEPPPP…IQEPDPTYEE (81 aa)) is disordered. S2 carries the post-translational modification N-acetylserine. A compositionally biased stretch (gly residues) spans 24-38 (GAGGSSSGNKGGPEG). The segment covering 39–53 (GAAPAAPCAAGSGPA) has biased composition (low complexity). T55 carries the phosphothreonine modification. S65 is subject to Phosphoserine. Basic and acidic residues predominate over residues 68 to 81 (KQKEIQEPDPTYEE). Residue K82 forms a Glycyl lysine isopeptide (Lys-Gly) (interchain with G-Cter in SUMO2) linkage. Position 112 is a phosphothreonine (T112). S115, S136, and S170 each carry phosphoserine. Residues 191–356 (ISLYENGING…WSLLNFLLPD (166 aa)) enclose the Helicase ATP-binding domain. Residue 204–211 (DEMGLGKT) participates in ATP binding. The DEAH box signature appears at 307-310 (DEAH). An N6-acetyllysine modification is found at K439. The Helicase C-terminal domain maps to 486–637 (VLDKLLPKLK…SIVIQQGRLV (152 aa)). Glycyl lysine isopeptide (Lys-Gly) (interchain with G-Cter in SUMO2) cross-links involve residues K643, K646, K693, K721, and K734. The residue at position 754 (S754) is a Phosphoserine. SANT domains lie at 839–891 (QGFT…ERCN) and 942–1006 (KGKN…LITL). Residue K965 forms a Glycyl lysine isopeptide (Lys-Gly) (interchain with G-Cter in SUMO2) linkage. The disordered stretch occupies residues 1014 to 1051 (LEEKEKAEKKKRGPKPSTQKRKMDGAPDGRGRKKKLKL). Residues 1022–1033 (KKKRGPKPSTQK) show a composition bias toward basic residues. Residues 1034–1043 (RKMDGAPDGR) show a composition bias toward basic and acidic residues.

Belongs to the SNF2/RAD54 helicase family. ISWI subfamily. As to quaternary structure, component of the ACF-5 ISWI chromatin-remodeling complex (also called the ACF/WCRF complex) at least composed of SMARCA5/SNF2H and BAZ1A/ACF1, which regulates the spacing of histone octamers on the DNA template to facilitate access to DNA. Within the complex interacts with BAZ1A/ACF1; the interaction is direct and is required to slide nucleosomes from end to center positions on a DNA template in an ATP-dependent manner. Component of the CHRAC ISWI chromatin-remodeling complex at least composed of SMARCA5/SNF2H, BAZ1A/ACF1, CHRAC1 and POLE3; the complex preferentially binds DNA through the CHRAC1-POLE3 heterodimer and possesses ATP-dependent nucleosome-remodeling activity. Within the complex interacts with BAZ1A/ACF1; the interaction is direct and promotes the interaction with the POLE3-CHRAC1 heterodimer. Within the complex interacts with the POLE3-CHRAC1 heterodimer; the interaction is direct and enhances nucleosome sliding activity by the SMARCA5/SNF2H and BAZ1A/ACF1 interaction. Neither POLE3 nor CHRAC1 enhances nucleosome sliding activity of the ACF-5 ISWI chromatin remodeling complex. Component of the WICH-5 ISWI chromatin-remodeling complex (also called the WICH complex) at least composed of SMARCA5/SNF2H and BAZ1B/WSTF, which regulates the spacing of histone octamers on the DNA template to facilitate access to DNA. Within the complex interacts with BAZ1B/WSTF. Component of the NoRC-5 ISWI chromatin-remodeling complex (also called the NoRC chromatin-remodeling complex) at least composed of SMARCA5/SNF2H and BAZ2A/TIP5; the complex suppresses rDNA transcription by a combination of nucleosome remodeling, histone deacetylation, and DNA methylation. Within the complex interacts with BAZ2A/TIP5. Within the complex interacts with HDAC1. Component of the BRF-5 ISWI chromatin-remodeling complex at least composed of SMARCA5/SNF2H and BAZ2B. Within the complex interacts with BAZ2B. Component of the NURF-5 ISWI chromatin-remodeling complex at least composed of SMARCA5/SNF2H and BPTF. Within the complex interacts with BPFT. Component of the CERF-5 ISWI chromatin-remodeling complex at least composed of SMARCA5/SNF2H and CECR2. LUZP1 is detected as part of the CERF-5 complex in embryonic stem cells where it is involved in complex stabilization but is not detected in the complex in the testis. Component of the RSF-5 ISWI chromatin-remodeling complex (also called the RSF complex) at least composed of SMARCA5/SNF2H and RSF1. Within the complex interacts with RSF1. Interacts with the cohesin complex component RAD21; the interaction is direct. Interacts with the NuRD complex components HDAC2, RBBP4 and CHD4; the interactions are direct. Interacts with PCNA. Component of the B-WICH complex, at least composed of SMARCA5/SNF2H, BAZ1B/WSTF, SF3B1, DEK, MYO1C, ERCC6, MYBBP1A and DDX21 which positively regulates RNA polymerase III transcription. Interacts with MYO1C. Interacts with BEND3. Interacts with SIRT6; promoting recruitment to DNA damage sites. In terms of tissue distribution, ubiquitously expressed.

It is found in the nucleus. Its subcellular location is the chromosome. It catalyses the reaction ATP + H2O = ADP + phosphate + H(+). In terms of biological role, ATPase that possesses intrinsic ATP-dependent nucleosome-remodeling activity. Catalytic subunit of ISWI chromatin-remodeling complexes, which form ordered nucleosome arrays on chromatin and facilitate access to DNA during DNA-templated processes such as DNA replication, transcription, and repair; this may require intact histone H4 tails. Within the ISWI chromatin-remodeling complexes, slides edge- and center-positioned histone octamers away from their original location on the DNA template. Catalytic activity and histone octamer sliding propensity is regulated and determined by components of the ISWI chromatin-remodeling complexes. The BAZ1A/ACF1-, BAZ1B/WSTF-, BAZ2A/TIP5- and BAZ2B-containing ISWI chromatin-remodeling complexes regulate the spacing of nucleosomes along the chromatin and have the ability to slide mononucleosomes to the center of a DNA template in an ATP-dependent manner. The CECR2- and RSF1-containing ISWI chromatin-remodeling complexes do not have the ability to slide mononucleosomes to the center of a DNA template. Binds to core histones together with RSF1, and is required for the assembly of regular nucleosome arrays by the RSF-5 ISWI chromatin-remodeling complex. Involved in DNA replication and together with BAZ1A/ACF1 is required for replication of pericentric heterochromatin in S-phase. Probably plays a role in repression of RNA polymerase I dependent transcription of the rDNA locus, through the recruitment of the SIN3/HDAC1 corepressor complex to the rDNA promoter. The WICH-5 ISWI chromatin-remodeling complex regulates the transcription of various genes, has a role in RNA polymerase I and RNA polymerase III transcription, mediates the histone H2AX phosphorylation at 'Tyr-142', and is involved in the maintenance of chromatin structures during DNA replication processes. Essential component of the NoRC-5 ISWI chromatin-remodeling complex, a complex that mediates silencing of a fraction of rDNA by recruiting histone-modifying enzymes and DNA methyltransferases, leading to heterochromatin formation and transcriptional silencing. Required for embryonic development and differentiation, and the proliferation of early blastocyst-derived stem cells. This chain is SWI/SNF-related matrix-associated actin-dependent regulator of chromatin subfamily A member 5 (Smarca5), found in Mus musculus (Mouse).